A 185-amino-acid chain; its full sequence is Large ribosomal subunit protein bL25 (185 aa).

It belongs to the bacterial ribosomal protein bL25 family. CTC subfamily. In terms of assembly, part of the 50S ribosomal subunit; part of the 5S rRNA/L5/L18/L25 subcomplex. Contacts the 5S rRNA. Binds to the 5S rRNA independently of L5 and L18.

Functionally, this is one of the proteins that binds to the 5S RNA in the ribosome where it forms part of the central protuberance. The sequence is that of Large ribosomal subunit protein bL25 from Microcystis aeruginosa (strain NIES-843 / IAM M-2473).